The following is a 754-amino-acid chain: Lysophospholipase 3 (754 aa).

An N-terminal signal peptide occupies residues 1 to 19 (MKVNLKLIIGSILISQAQA). 2 stretches are compositionally biased toward low complexity: residues 25-40 (SSGSSSSSDSSPSETG) and 50-88 (LFGSGSSLTQSSSAQASSTKSTSDSASSTDSSLFSSSNS). Residues 25–88 (SSGSSSSSDS…DSSLFSSSNS (64 aa)) form a disordered region. Residues N112, N156, N174, N317, N325, N354, N391, N423, N470, N510, N515, N560, N577, N597, N625, and N631 are each glycosylated (N-linked (GlcNAc...) asparagine). Positions 114 to 670 (TCPSKKTFIR…QEYCWTGGFK (557 aa)) constitute a PLA2c domain. A compositionally biased stretch (low complexity) spans 687–721 (KTHTSGGTSSTTQQTSTTTGSSANGGSSSTGSSSS). Residues 687–727 (KTHTSGGTSSTTQQTSTTTGSSANGGSSSTGSSSSSKKKNG) form a disordered region.

The protein belongs to the lysophospholipase family.

It is found in the secreted. The enzyme catalyses a 1-acyl-sn-glycero-3-phosphocholine + H2O = sn-glycerol 3-phosphocholine + a fatty acid + H(+). Functionally, catalyzes the release of fatty acids from lysophospholipids. Phospholipase B may well contribute to pathogenicity by abetting the fungus in damaging and traversing host cell membranes, processes which likely increase the rapidity of disseminated infection. The protein is Lysophospholipase 3 (PLB3) of Candida albicans (Yeast).